The primary structure comprises 362 residues: Phosphoserine aminotransferase (362 aa).

Residue arginine 42 participates in L-glutamate binding. Residues 76-77 (AR), tryptophan 102, threonine 154, aspartate 174, and glutamine 197 each bind pyridoxal 5'-phosphate. Lysine 198 bears the N6-(pyridoxal phosphate)lysine mark. Position 239 to 240 (239 to 240 (NT)) interacts with pyridoxal 5'-phosphate.

It belongs to the class-V pyridoxal-phosphate-dependent aminotransferase family. SerC subfamily. In terms of assembly, homodimer. The cofactor is pyridoxal 5'-phosphate.

The protein resides in the cytoplasm. The enzyme catalyses O-phospho-L-serine + 2-oxoglutarate = 3-phosphooxypyruvate + L-glutamate. It carries out the reaction 4-(phosphooxy)-L-threonine + 2-oxoglutarate = (R)-3-hydroxy-2-oxo-4-phosphooxybutanoate + L-glutamate. It functions in the pathway amino-acid biosynthesis; L-serine biosynthesis; L-serine from 3-phospho-D-glycerate: step 2/3. The protein operates within cofactor biosynthesis; pyridoxine 5'-phosphate biosynthesis; pyridoxine 5'-phosphate from D-erythrose 4-phosphate: step 3/5. Catalyzes the reversible conversion of 3-phosphohydroxypyruvate to phosphoserine and of 3-hydroxy-2-oxo-4-phosphonooxybutanoate to phosphohydroxythreonine. In Buchnera aphidicola subsp. Cinara cedri (strain Cc), this protein is Phosphoserine aminotransferase.